Consider the following 682-residue polypeptide: Methionine--tRNA ligase (682 aa).

The 'HIGH' region motif lies at 14–24 (PYANGPVHLGH). Zn(2+)-binding residues include Cys-145, Cys-148, Cys-158, and Cys-161. The 'KMSKS' region signature appears at 331-335 (KMSKS). Lys-334 is an ATP binding site. In terms of domain architecture, tRNA-binding spans 580–682 (AFAAVDLRVA…SGAKPGQRIK (103 aa)).

It belongs to the class-I aminoacyl-tRNA synthetase family. MetG type 1 subfamily. In terms of assembly, homodimer. Zn(2+) is required as a cofactor.

It localises to the cytoplasm. It catalyses the reaction tRNA(Met) + L-methionine + ATP = L-methionyl-tRNA(Met) + AMP + diphosphate. Is required not only for elongation of protein synthesis but also for the initiation of all mRNA translation through initiator tRNA(fMet) aminoacylation. The sequence is that of Methionine--tRNA ligase from Pseudomonas syringae pv. tomato (strain ATCC BAA-871 / DC3000).